The primary structure comprises 298 residues: Junctional adhesion molecule A (298 aa).

Positions 1–28 are cleaved as a signal peptide; sequence MGTEARAGRRQLLVFTSVVLSSLALGRG. Ig-like V-type domains are found at residues 29 to 126 and 134 to 227; these read AVYT…VQLT and PTVH…EAVR. The Extracellular segment spans residues 29-237; sequence AVYTSEPDVR…MEAAELNVGG (209 aa). Intrachain disulfides connect C49/C108 and C152/C211. Residue N184 is glycosylated (N-linked (GlcNAc...) asparagine). A helical transmembrane segment spans residues 238–258; that stretch reads IVAAVLVTLILLGFLILGIWF. Over 259–298 the chain is Cytoplasmic; that stretch reads AYRRGYFDRTKKGTSSKKVIYSQPAARSEGEFRQTSSFLV. Residues S280 and S286 each carry the phosphoserine modification.

Belongs to the immunoglobulin superfamily. Interacts with the ninth PDZ domain of MPDZ. Interacts with the first PDZ domain of PARD3. The association between PARD3 and PARD6B probably disrupts this interaction. Interacts with ITGAL (via I-domain). Interacts with CD151. In terms of assembly, (Microbial infection) Interacts with calicivirus capsid protein. As to quaternary structure, (Microbial infection) Interacts with the orthoreovirus sigma-1 capsid protein.

Its subcellular location is the cell junction. It localises to the tight junction. The protein resides in the cell membrane. Its function is as follows. Seems to play a role in epithelial tight junction formation. Appears early in primordial forms of cell junctions and recruits PARD3. The association of the PARD6-PARD3 complex may prevent the interaction of PARD3 with JAM1, thereby preventing tight junction assembly. Plays a role in regulating monocyte transmigration involved in integrity of epithelial barrier. Ligand for integrin alpha-L/beta-2 involved in memory T-cell and neutrophil transmigration. Involved in platelet activation. In terms of biological role, (Microbial infection) Acts as a functional receptor for murine norovirus. Functionally, (Microbial infection) In case of orthoreovirus infection, serves as receptor for the virus. The polypeptide is Junctional adhesion molecule A (F11R) (Felis catus (Cat)).